The chain runs to 113 residues: Large ribosomal subunit protein bL19 (113 aa).

It belongs to the bacterial ribosomal protein bL19 family.

Its function is as follows. This protein is located at the 30S-50S ribosomal subunit interface and may play a role in the structure and function of the aminoacyl-tRNA binding site. The polypeptide is Large ribosomal subunit protein bL19 (Mycobacteroides abscessus (strain ATCC 19977 / DSM 44196 / CCUG 20993 / CIP 104536 / JCM 13569 / NCTC 13031 / TMC 1543 / L948) (Mycobacterium abscessus)).